A 422-amino-acid polypeptide reads, in one-letter code: UDP-N-acetylglucosamine 1-carboxyvinyltransferase (422 aa).

Phosphoenolpyruvate is bound at residue 22 to 23 (KN). Arginine 93 contacts UDP-N-acetyl-alpha-D-glucosamine. Residue cysteine 117 is the Proton donor of the active site. A 2-(S-cysteinyl)pyruvic acid O-phosphothioketal modification is found at cysteine 117. Residues 122–126 (RPVDL), aspartate 308, and leucine 330 each bind UDP-N-acetyl-alpha-D-glucosamine.

This sequence belongs to the EPSP synthase family. MurA subfamily.

It localises to the cytoplasm. It carries out the reaction phosphoenolpyruvate + UDP-N-acetyl-alpha-D-glucosamine = UDP-N-acetyl-3-O-(1-carboxyvinyl)-alpha-D-glucosamine + phosphate. It participates in cell wall biogenesis; peptidoglycan biosynthesis. Cell wall formation. Adds enolpyruvyl to UDP-N-acetylglucosamine. This is UDP-N-acetylglucosamine 1-carboxyvinyltransferase from Helicobacter pylori (strain J99 / ATCC 700824) (Campylobacter pylori J99).